The sequence spans 868 residues: Monofunctional pimaradiene synthase (868 aa).

Aspartate 620, aspartate 624, asparagine 764, threonine 768, and glutamate 772 together coordinate Mg(2+).

This sequence belongs to the terpene synthase family. Tpsd subfamily. The cofactor is Mg(2+).

It catalyses the reaction (+)-copalyl diphosphate = (-)-pimara-8(14),15-diene + diphosphate. It functions in the pathway terpene metabolism; oleoresin biosynthesis. Involved in defensive oleoresin formation in conifers in response to insect attack or other injury. Involved in diterpene (C20) olefins biosynthesis. Monofunctional enzyme lacking the DXDD motif in the class II active site relevant for the cyclization of geranylgeranyl diphosphate (GGPP). Requires (+)-copalyl diphosphate ((+)-CPP) as substrate, but no activity with GGPP or ent-CPP. Pimaradiene is the major products of the enzyme. This chain is Monofunctional pimaradiene synthase, found in Pinus contorta (Shore pine).